The primary structure comprises 617 residues: Sodium-dependent noradrenaline transporter (617 aa).

Residues 1–23 form a disordered region; it reads MLLARMNPQVQPENNGADTGPEQ. Over 1 to 62 the chain is Cytoplasmic; it reads MLLARMNPQV…AQPRETWGKK (62 aa). A compositionally biased stretch (polar residues) spans 8–17; that stretch reads PQVQPENNGA. A helical membrane pass occupies residues 63–88; it reads IDFLLSVVGFAVDLANVWRFPYLCYK. 3 residues coordinate Na(+): glycine 71, alanine 73, and valine 74. Aspartate 75 serves as a coordination point for (R)-noradrenaline. Aspartate 75 serves as a coordination point for dopamine. Asparagine 78 is a Na(+) binding site. Residues tyrosine 87 and lysine 88 each contribute to the (R)-noradrenaline site. The Extracellular portion of the chain corresponds to 89–92; that stretch reads NGGG. Residues 93-116 form a helical membrane-spanning segment; sequence AFLIPYTLFLIIAGMPLFYMELAL. The Cytoplasmic segment spans residues 117–135; that stretch reads GQYNREGAATVWKICPFFK. The chain crosses the membrane as a helical span at residues 136 to 166; that stretch reads GVGYAVILIALYVGFYYNVIIAWSLYYLFSS. (R)-noradrenaline is bound by residues alanine 145 and glycine 149. Position 145 (alanine 145) interacts with dopamine. Topologically, residues 167–233 are extracellular; sequence FTLNLPWTDC…SSGIHDIGLP (67 aa). The cysteines at positions 176 and 185 are disulfide-linked. N-linked (GlcNAc...) asparagine glycans are attached at residues asparagine 184, asparagine 192, and asparagine 198. Residues 234–254 traverse the membrane as a helical segment; the sequence is QWQLLLCLMVVVIVLYFSLWK. Over 255–257 the chain is Cytoplasmic; it reads GVK. A helical membrane pass occupies residues 258-282; sequence TSGKVVWITATLPYFVLFVLLVHGV. Residues 283–306 lie on the Extracellular side of the membrane; the sequence is TLPGASNGINAYLHIDFYRLKEAT. Residues 307–332 form a helical membrane-spanning segment; the sequence is VWIDAATQIFFSLGAGFGVLIAFASY. Phenylalanine 317 contacts (R)-noradrenaline. Phenylalanine 317 contributes to the dopamine binding site. Serine 318 serves as a coordination point for Na(+). The Cytoplasmic segment spans residues 333 to 338; the sequence is NKFDNN. The chain crosses the membrane as a helical span at residues 339 to 362; sequence CYRDALLTSSINCITSFVSGFAIF. Position 350 (asparagine 350) interacts with Na(+). Over 363–402 the chain is Extracellular; it reads SILGYMAHEHKVNIEDVATEGAGLVFILYPEAISTLSGST. Glutamate 382 is a (R)-noradrenaline binding site. Glutamate 382 contributes to the dopamine binding site. The chain crosses the membrane as a helical span at residues 403–428; it reads FWAVVFFVMLLALGLDSSMGGMEAVI. The Na(+) site is built by aspartate 418 and serine 419. At 429–443 the chain is on the cytoplasmic side; sequence TGLADDFQVLKRHRK. The helical transmembrane segment at 444-464 threads the bilayer; the sequence is LFTFGVTFSTFLLALFCITKG. Glycine 465 is a topological domain (extracellular). A helical membrane pass occupies residues 466 to 492; sequence IYVLTLLDTFAAGTSILFAVLMEAIGV. Residues 493–522 lie on the Cytoplasmic side of the membrane; the sequence is SWFYGVDRFSNDIQQMMGFRPGLYWRLCWK. Residues 523-545 form a helical membrane-spanning segment; it reads FVSPAFLLFVVVVSIINFKPLTY. At 546 to 548 the chain is on the extracellular side; sequence DDY. Residues 549–569 form a helical membrane-spanning segment; sequence IFPPWANWVGWGIALSSMVLV. The Cytoplasmic segment spans residues 570–617; it reads PIYVIYKFLSTQGSLWERLAYGITPENEHHLVAQRDIRQFQLQHWLAI.

This sequence belongs to the sodium:neurotransmitter symporter (SNF) (TC 2.A.22) family. SLC6A2 subfamily. As to quaternary structure, monomer. Can form homodimers in the cell membrane; homodimerization is mostly mediated by cholesterol and lipids, and regulates neurotransmitter transport activity. Interacts with PRKCABP. Post-translationally, palmitoylated; palmitoylation regulates protein levels and neurotransmitter transport.

It is found in the cell membrane. The protein localises to the cell projection. Its subcellular location is the axon. The protein resides in the synapse. It localises to the synaptosome. It carries out the reaction (R)-noradrenaline(out) + chloride(out) + Na(+)(out) = (R)-noradrenaline(in) + chloride(in) + Na(+)(in). The enzyme catalyses dopamine(out) + chloride(out) + Na(+)(out) = dopamine(in) + chloride(in) + Na(+)(in). It catalyses the reaction dopamine(out) + chloride(out) + 2 Na(+)(out) = dopamine(in) + chloride(in) + 2 Na(+)(in). Its activity is regulated as follows. Inhibited by mazindol, desipramine, nomifensine and nortriptyline. Its function is as follows. Mediates sodium- and chloride-dependent transport of norepinephrine (also known as noradrenaline), the primary signaling neurotransmitter in the autonomic sympathetic nervous system. Is responsible for norepinephrine re-uptake and clearance from the synaptic cleft, thus playing a crucial role in norepinephrine inactivation and homeostasis. Can also mediate sodium- and chloride-dependent transport of dopamine. This Homo sapiens (Human) protein is Sodium-dependent noradrenaline transporter.